A 353-amino-acid polypeptide reads, in one-letter code: Guanine nucleotide-binding protein alpha-1 subunit (353 aa).

The tract at residues 1–26 (MGCGMSTEEKEGKARNEEIENQLKRD) is disordered. Glycine 2 carries the N-myristoyl glycine lipid modification. Cysteine 3 carries the S-palmitoyl cysteine lipid modification. Residues 7-26 (TEEKEGKARNEEIENQLKRD) are compositionally biased toward basic and acidic residues. In terms of domain architecture, G-alpha spans 32–353 (NEIKMLLLGA…QENLRLCGLI (322 aa)). Positions 35 to 48 (KMLLLGAGESGKST) are G1 motif. Positions 43, 44, 45, 46, 47, 48, 150, 175, 181, 203, 269, 270, 272, and 325 each coordinate GTP. Serine 47 serves as a coordination point for Mg(2+). The interval 173–181 (DVLRSRVKT) is G2 motif. Threonine 181 contributes to the Mg(2+) binding site. The G3 motif stretch occupies residues 196-205 (YRMFDVGGQR). The segment at 265–272 (ILFLNKID) is G4 motif. A G5 motif region spans residues 323 to 328 (TCATDT).

The protein belongs to the G-alpha family. G(q) subfamily. In terms of assembly, g proteins are composed of 3 units; alpha, beta and gamma. The alpha chain contains the guanine nucleotide binding site. Mg(2+) is required as a cofactor.

Guanine nucleotide-binding proteins (G proteins) are involved as modulators or transducers in various transmembrane signaling systems. The chain is Guanine nucleotide-binding protein alpha-1 subunit (gna-1) from Neurospora crassa (strain ATCC 24698 / 74-OR23-1A / CBS 708.71 / DSM 1257 / FGSC 987).